The primary structure comprises 339 residues: ATP-dependent 6-phosphofructokinase (339 aa).

Residues Gly-11, 72–73, and 102–105 contribute to the ATP site; these read RY and GDGS. Residue Asp-103 participates in Mg(2+) binding. Substrate contacts are provided by residues 125–127, Arg-162, and 169–171; these read TID and MGR. Asp-127 acts as the Proton acceptor in catalysis. Residues 185-187 and 214-216 each bind ADP; these read GAD and KSH. Residues Glu-223, Arg-245, and 251-254 each bind substrate; that span reads HVIR.

This sequence belongs to the phosphofructokinase type A (PFKA) family. ATP-dependent PFK group I subfamily. Prokaryotic clade 'B1' sub-subfamily. As to quaternary structure, homotetramer. Mg(2+) serves as cofactor.

The protein resides in the cytoplasm. The catalysed reaction is beta-D-fructose 6-phosphate + ATP = beta-D-fructose 1,6-bisphosphate + ADP + H(+). The protein operates within carbohydrate degradation; glycolysis; D-glyceraldehyde 3-phosphate and glycerone phosphate from D-glucose: step 3/4. Its activity is regulated as follows. Allosterically activated by ADP and other diphosphonucleosides, and allosterically inhibited by phosphoenolpyruvate. Functionally, catalyzes the phosphorylation of D-fructose 6-phosphate to fructose 1,6-bisphosphate by ATP, the first committing step of glycolysis. In Streptococcus thermophilus (strain ATCC BAA-491 / LMD-9), this protein is ATP-dependent 6-phosphofructokinase.